The following is a 266-amino-acid chain: Indole-3-glycerol phosphate synthase (266 aa).

The protein belongs to the TrpC family.

The enzyme catalyses 1-(2-carboxyphenylamino)-1-deoxy-D-ribulose 5-phosphate + H(+) = (1S,2R)-1-C-(indol-3-yl)glycerol 3-phosphate + CO2 + H2O. It participates in amino-acid biosynthesis; L-tryptophan biosynthesis; L-tryptophan from chorismate: step 4/5. The protein is Indole-3-glycerol phosphate synthase of Paracidovorax citrulli (strain AAC00-1) (Acidovorax citrulli).